Reading from the N-terminus, the 391-residue chain is 3-ketoacyl-CoA thiolase (391 aa).

Catalysis depends on C95, which acts as the Acyl-thioester intermediate. Active-site proton acceptor residues include H347 and C377.

It belongs to the thiolase-like superfamily. Thiolase family. In terms of assembly, heterotetramer of two alpha chains (FadB) and two beta chains (FadA).

The protein localises to the cytoplasm. The catalysed reaction is an acyl-CoA + acetyl-CoA = a 3-oxoacyl-CoA + CoA. It participates in lipid metabolism; fatty acid beta-oxidation. In terms of biological role, catalyzes the final step of fatty acid oxidation in which acetyl-CoA is released and the CoA ester of a fatty acid two carbons shorter is formed. The polypeptide is 3-ketoacyl-CoA thiolase (Marinobacter nauticus (strain ATCC 700491 / DSM 11845 / VT8) (Marinobacter aquaeolei)).